We begin with the raw amino-acid sequence, 187 residues long: Adenine phosphoribosyltransferase (187 aa).

It belongs to the purine/pyrimidine phosphoribosyltransferase family. As to quaternary structure, homodimer.

The protein localises to the cytoplasm. The catalysed reaction is AMP + diphosphate = 5-phospho-alpha-D-ribose 1-diphosphate + adenine. It participates in purine metabolism; AMP biosynthesis via salvage pathway; AMP from adenine: step 1/1. Catalyzes a salvage reaction resulting in the formation of AMP, that is energically less costly than de novo synthesis. The protein is Adenine phosphoribosyltransferase of Yersinia pestis (strain Pestoides F).